Here is a 767-residue protein sequence, read N- to C-terminus: Protein NLP3 (767 aa).

Disordered stretches follow at residues 462–494 (ATPP…RKTK), 590–622 (INPT…CSSE), and 646–672 (HEDQ…KAKD). The RWP-RK domain occupies 482–566 (SASSLENRKR…MDSVEGVQGS (85 aa)). Residues 485–506 (SLENRKRKTKAEKDITLDTLRQ) adopt a coiled-coil conformation. 2 stretches are compositionally biased toward low complexity: residues 604 to 622 (PSSS…CSSE) and 655 to 667 (TSSL…ATTP). In terms of domain architecture, PB1 spans 673 to 759 (GMKVKAMFGD…ETIRILVHHP (87 aa)).

The protein localises to the nucleus. In terms of biological role, probable transcription factor. This Arabidopsis thaliana (Mouse-ear cress) protein is Protein NLP3 (NLP3).